The following is a 114-amino-acid chain: Amphinase-3 (114 aa).

Residue His15 is the Proton acceptor of the active site. N-linked (GlcNAc...) asparagine glycosylation is present at Asn25. 4 disulfides stabilise this stretch: Cys26–Cys79, Cys41–Cys85, Cys59–Cys100, and Cys97–Cys114. 42-46 (KPINT) contributes to the substrate binding site. Asn67 and Asn91 each carry an N-linked (GlcNAc...) asparagine glycan. Catalysis depends on His107, which acts as the Proton donor.

Belongs to the pancreatic ribonuclease family. As to quaternary structure, monomer. Post-translationally, there are at least five different forms arising from glycan heterogeneity.

It is found in the secreted. In terms of biological role, endonuclease, hydrolyzes highly polymerized RNA, poly(U) and poly(C), and the dinucleotides CpA and UpA. More active towards rCA than rUA or rUG. Has cytotoxic activity against cultured human submaxillary gland carcinoma cells. This is Amphinase-3 from Lithobates pipiens (Northern leopard frog).